Consider the following 594-residue polypeptide: A-type ATP synthase subunit A (594 aa).

236 to 243 (GPFGSGKT) is an ATP binding site.

The protein belongs to the ATPase alpha/beta chains family. Has multiple subunits with at least A(3), B(3), C, D, E, F, H, I and proteolipid K(x).

The protein localises to the cell membrane. The catalysed reaction is ATP + H2O + 4 H(+)(in) = ADP + phosphate + 5 H(+)(out). In terms of biological role, component of the A-type ATP synthase that produces ATP from ADP in the presence of a proton gradient across the membrane. The A chain is the catalytic subunit. This chain is A-type ATP synthase subunit A, found in Pyrobaculum calidifontis (strain DSM 21063 / JCM 11548 / VA1).